A 524-amino-acid polypeptide reads, in one-letter code: RNA-directed RNA polymerase (524 aa).

The RdRp catalytic domain maps to 220-340 (QSIAQIDFSS…NFETALCRQE (121 aa)).

It carries out the reaction RNA(n) + a ribonucleoside 5'-triphosphate = RNA(n+1) + diphosphate. In terms of biological role, RNA-dependent RNA polymerase which replicates the viral genome. In Cryptosporidium parvum, this protein is RNA-directed RNA polymerase.